A 695-amino-acid polypeptide reads, in one-letter code: Elongation factor G (695 aa).

Positions 8–282 (EKTRNIGIMA…AVLDYLPAPT (275 aa)) constitute a tr-type G domain. Residues 17–24 (AHIDAGKT), 81–85 (DTPGH), and 135–138 (NKMD) each bind GTP.

It belongs to the TRAFAC class translation factor GTPase superfamily. Classic translation factor GTPase family. EF-G/EF-2 subfamily.

Its subcellular location is the cytoplasm. In terms of biological role, catalyzes the GTP-dependent ribosomal translocation step during translation elongation. During this step, the ribosome changes from the pre-translocational (PRE) to the post-translocational (POST) state as the newly formed A-site-bound peptidyl-tRNA and P-site-bound deacylated tRNA move to the P and E sites, respectively. Catalyzes the coordinated movement of the two tRNA molecules, the mRNA and conformational changes in the ribosome. This Listeria welshimeri serovar 6b (strain ATCC 35897 / DSM 20650 / CCUG 15529 / CIP 8149 / NCTC 11857 / SLCC 5334 / V8) protein is Elongation factor G.